Reading from the N-terminus, the 679-residue chain is E3 ubiquitin ligase RNF157 (679 aa).

G2 carries the N-myristoyl glycine lipid modification. The segment at 277–316 (CVVCLSDVRDTLILPCRHLCLCNTCADTLRYQANNCPICR) adopts an RING-type zinc-finger fold. The short motif at 329–332 (RKKL) is the D-box 1 element. Composition is skewed to polar residues over residues 339–349 (SFNPIISSQTS) and 478–537 (ESEN…SMSG). Disordered regions lie at residues 339–362 (SFNPIISSQTSDSEEHPSSENIPP), 416–604 (LDRL…TQEG), and 650–679 (VSRNAQRRRLSSSSLEDSETRPCVWGPLAV). A compositionally biased stretch (acidic residues) spans 585 to 598 (QDAEGNDVIEEEDG). The short motif at 656 to 659 (RRRL) is the D-box 2 element. S660, S661, S662, and S663 each carry phosphoserine.

Interacts with APBB1. Interacts with CHD1; CHD1-binding controls RNF157 stability. Interacts with ATRN, MEGF8, TECR, MSI2, PLRG1, BYSL, MTERF3, PSMA1, MRPS18B, PRPF4, FASTKD2, SLC25A1, SMU1, CNOT9, MRPS2, MAGT1, FXR2, EMD, PSMD8, HDAC1, RAN, HSD17B12, TXNDC5 and MRPL19. In terms of processing, phosphorylation at Ser-660, Ser-661, Ser-662 and Ser-663 downstream of the PI3K and MAPK pathways influences the E3 ligase activity and stability of RNF157 during the cell cycle in an anaphase-promoting complex/cyclosome-CDH1-dependent manner.

It is found in the cytoplasm. The catalysed reaction is S-ubiquitinyl-[E2 ubiquitin-conjugating enzyme]-L-cysteine + [acceptor protein]-L-lysine = [E2 ubiquitin-conjugating enzyme]-L-cysteine + N(6)-ubiquitinyl-[acceptor protein]-L-lysine.. Its function is as follows. E3 ubiquitin ligase that ubiquitinates APBB1 for its degradation by the proteasome and thus prevents apoptosis and promotes survival of neurons. Has a dual role in neurons as it is also required for dendrite growth and maintenance for which its ligase activity is not critical. May act as a scaffold molecule to regulate this process. Acts as a downstream effector of the interconnected PI3K and MAPK signaling pathways and thus participates in the regulation of the cell cycle. This Homo sapiens (Human) protein is E3 ubiquitin ligase RNF157 (RNF157).